A 122-amino-acid polypeptide reads, in one-letter code: Large ribosomal subunit protein uL14 (122 aa).

The protein belongs to the universal ribosomal protein uL14 family. In terms of assembly, part of the 50S ribosomal subunit. Forms a cluster with proteins L3 and L19. In the 70S ribosome, L14 and L19 interact and together make contacts with the 16S rRNA in bridges B5 and B8.

Functionally, binds to 23S rRNA. Forms part of two intersubunit bridges in the 70S ribosome. The sequence is that of Large ribosomal subunit protein uL14 from Nitratidesulfovibrio vulgaris (strain ATCC 29579 / DSM 644 / CCUG 34227 / NCIMB 8303 / VKM B-1760 / Hildenborough) (Desulfovibrio vulgaris).